Reading from the N-terminus, the 227-residue chain is Phosphoglycolate phosphatase (227 aa).

Catalysis depends on Asp11, which acts as the Nucleophile. Mg(2+) contacts are provided by Asp11, Asp13, and Asp176.

Belongs to the HAD-like hydrolase superfamily. CbbY/CbbZ/Gph/YieH family. Mg(2+) is required as a cofactor.

The enzyme catalyses 2-phosphoglycolate + H2O = glycolate + phosphate. Its pathway is organic acid metabolism; glycolate biosynthesis; glycolate from 2-phosphoglycolate: step 1/1. Its function is as follows. Specifically catalyzes the dephosphorylation of 2-phosphoglycolate. Is involved in the dissimilation of the intracellular 2-phosphoglycolate formed during the DNA repair of 3'-phosphoglycolate ends, a major class of DNA lesions induced by oxidative stress. This is Phosphoglycolate phosphatase from Aliivibrio fischeri (strain ATCC 700601 / ES114) (Vibrio fischeri).